The following is a 185-amino-acid chain: MVLSSQLSVGMFISTKDGLYKVVSVSKVSGSKGDTFIKVALQAAGSDVVVERNFKAGQEVKEAQFEPRNLEYLYLEEDNYLFLDLGNYEKIYIPKEIMKENAMFLKAGVTISALVHEGIVFSMELPHFLELMVSKTDFPGDSLSLSGGAKKALLETGVEVLVPPFVEIGDVIKVDTRTCEYIQRV.

It belongs to the elongation factor P family.

Its subcellular location is the cytoplasm. The protein operates within protein biosynthesis; polypeptide chain elongation. Functionally, involved in peptide bond synthesis. Stimulates efficient translation and peptide-bond synthesis on native or reconstituted 70S ribosomes in vitro. Probably functions indirectly by altering the affinity of the ribosome for aminoacyl-tRNA, thus increasing their reactivity as acceptors for peptidyl transferase. The protein is Elongation factor P 1 (efp1) of Chlamydia muridarum (strain MoPn / Nigg).